A 202-amino-acid chain; its full sequence is CASP-like protein 1E1 (202 aa).

Over 1-33 (MESQCRPNVDGVHNGVESHVKVVEKPRSVGSSS) the chain is Cytoplasmic. The chain crosses the membrane as a helical span at residues 34–54 (EFVLRILGLLLTLIAAVVAGV). The Extracellular segment spans residues 55–85 (DKQTKIIPLTLIKTLPSLHVPVTAKWSDMSA). The helical transmembrane segment at 86–106 (FVYLVVSNAIACSYAAISLVL) threads the bilayer. The Cytoplasmic segment spans residues 107 to 118 (VTMLGRRGKGGR). The helical transmembrane segment at 119-139 (VLAVIVLDLHMVGLLFSANGA) threads the bilayer. Residues 140–172 (ATAVGVLGQYGNSHVEWKKVCNVFDSFCHHLVA) lie on the Extracellular side of the membrane. A helical membrane pass occupies residues 173-193 (SLALSFLGSLSFLGLVLLAIL). Over 194-202 (NLHKKSSTK) the chain is Cytoplasmic.

It belongs to the Casparian strip membrane proteins (CASP) family. Homodimer and heterodimers.

It localises to the cell membrane. The chain is CASP-like protein 1E1 from Vitis vinifera (Grape).